The following is a 209-amino-acid chain: Mitochondrial import inner membrane translocase subunit Tim23 (209 aa).

3 helical membrane passes run 73 to 93 (FELA…FGAL), 125 to 145 (ALWA…GVIV), and 180 to 200 (GGLA…WEHI).

The protein belongs to the Tim17/Tim22/Tim23 family. Component of the TIM23 complex at least composed of timm23, timm17 and timm50. The complex interacts with the timm44 component of the PAM complex.

The protein resides in the mitochondrion inner membrane. In terms of biological role, essential component of the TIM23 complex, a complex that mediates the translocation of transit peptide-containing proteins across the mitochondrial inner membrane. This is Mitochondrial import inner membrane translocase subunit Tim23 (timm23) from Xenopus laevis (African clawed frog).